The chain runs to 314 residues: Acetyl-coenzyme A carboxylase carboxyl transferase subunit beta (314 aa).

The region spanning Leu37 to Ala307 is the CoA carboxyltransferase N-terminal domain. 4 residues coordinate Zn(2+): Cys41, Cys44, Cys60, and Cys63. A C4-type zinc finger spans residues Cys41–Cys63.

This sequence belongs to the AccD/PCCB family. In terms of assembly, acetyl-CoA carboxylase is a heterohexamer composed of biotin carboxyl carrier protein (AccB), biotin carboxylase (AccC) and two subunits each of ACCase subunit alpha (AccA) and ACCase subunit beta (AccD). Requires Zn(2+) as cofactor.

It localises to the cytoplasm. The catalysed reaction is N(6)-carboxybiotinyl-L-lysyl-[protein] + acetyl-CoA = N(6)-biotinyl-L-lysyl-[protein] + malonyl-CoA. It functions in the pathway lipid metabolism; malonyl-CoA biosynthesis; malonyl-CoA from acetyl-CoA: step 1/1. Its function is as follows. Component of the acetyl coenzyme A carboxylase (ACC) complex. Biotin carboxylase (BC) catalyzes the carboxylation of biotin on its carrier protein (BCCP) and then the CO(2) group is transferred by the transcarboxylase to acetyl-CoA to form malonyl-CoA. This is Acetyl-coenzyme A carboxylase carboxyl transferase subunit beta from Synechococcus sp. (strain JA-2-3B'a(2-13)) (Cyanobacteria bacterium Yellowstone B-Prime).